Here is a 212-residue protein sequence, read N- to C-terminus: Prolactin (212 aa).

The first 26 residues, 1–26 (MARCCKCPRLHLAVTVLACVLVFTEG), serve as a signal peptide directing secretion. 2 disulfide bridges follow: C71–C185 and C202–C212.

The protein belongs to the somatotropin/prolactin family. As to expression, pituitary gland.

It localises to the secreted. This Ictalurus punctatus (Channel catfish) protein is Prolactin (prl).